The following is an 82-amino-acid chain: Large ribosomal subunit protein bL27 (82 aa).

Residues 1–21 (MAHKKGASSSRNGRDSNAKRL) form a disordered region.

This sequence belongs to the bacterial ribosomal protein bL27 family.

The polypeptide is Large ribosomal subunit protein bL27 (Tropheryma whipplei (strain Twist) (Whipple's bacillus)).